The chain runs to 806 residues: Minor extracellular protease Vpr (806 aa).

The N-terminal stretch at 1 to 28 (MKKGIIRFLLVSFVLFFALSTGITGVQA) is a signal peptide. The propeptide occupies 29-160 (APASSKTSAD…TISEDAVSPQ (132 aa)). The Inhibitor I9 domain occupies 57-142 (TVIVELKEKS…AVYPNVTYKT (86 aa)). Residues 158–597 (SPQMDDSAPY…ARIMNAIKAD (440 aa)) form the Peptidase S8 domain. Residues D189 and H233 each act as charge relay system in the active site. Positions 383-461 (ELVEAGIGEA…KLSLEDGEKL (79 aa)) constitute a PA domain. The active-site Charge relay system is the S534.

The protein belongs to the peptidase S8 family. In terms of processing, probably undergoes C-terminal processing or proteolysis. Auto-processed to form active enzymes of several different molecular weights.

The protein resides in the secreted. It localises to the cell wall. With respect to regulation, activity is inhibited by phenylmethylsulfonyl fluoride (PMSF), but not by EDTA. In terms of biological role, serine protease. Involved in the production of the competence and sporulation stimulating factor CSF. Is directly involved in the processing of pro-CSF to CSF. Can also cleave pro-PhrA to PhrA, but cannot cleave pro-PhrE. Shows fibrinolytic activity in vitro. Not essential for growth or sporulation. The polypeptide is Minor extracellular protease Vpr (Bacillus subtilis (strain 168)).